The primary structure comprises 424 residues: Solute carrier family 67 member A1 (424 aa).

10 helical membrane passes run 26 to 46 (ILLTYVLAATELTCLFMQFSI), 59 to 79 (IAFGYLQTTFGVLQLLGGPVF), 90 to 110 (AALTLSFLAALALYLLLAAAS), 156 to 176 (LGLCFGVGVILGSLLGGTLVS), 184 to 204 (AILAALATLLGAVLSFTCIPA), 243 to 263 (IFLVKVASNCPTGLFMVMFSI), 276 to 296 (AGYLMSFFGLLQMVTQGLVIG), 312 to 332 (VLVFIVVGLAMAWMSSVFHFC), 334 to 354 (LVPGLVFSLCTLNVVTDSMLI), and 391 to 411 (FGVPVFGHVQVAINTLVLLVL).

It belongs to the major facilitator (TC 2.A.1) superfamily. Organic cation transporter (TC 2.A.1.19) family. In terms of assembly, interacts with RNF167. Expressed at high levels in adult and fetal kidney and liver, and adult colon. Expressed in fetal renal proximal tubules (at protein level). Expressed at lower levels in heart, brain and lung.

The protein localises to the apical cell membrane. Functionally, may act as a transporter of organic cations based on a proton efflux antiport mechanism. May play a role in the transport of chloroquine and quinidine-related compounds in kidney. Plays a role in the regulation of lipid metabolism. The protein is Solute carrier family 67 member A1 of Homo sapiens (Human).